The primary structure comprises 269 residues: Enoyl-[acyl-carrier-protein] reductase [NADH] (269 aa).

Residues 20–21, 64–65, and 95–96 contribute to the NAD(+) site; these read SI, DV, and IG. Tyr158 contacts substrate. NAD(+) is bound by residues Lys165 and Ile194.

This sequence belongs to the short-chain dehydrogenases/reductases (SDR) family. FabI subfamily. As to quaternary structure, homodimer. Homotetramer.

It carries out the reaction a 2,3-saturated acyl-[ACP] + NAD(+) = a (2E)-enoyl-[ACP] + NADH + H(+). It catalyses the reaction a 2,3-saturated acyl-CoA + NAD(+) = a (2E)-enoyl-CoA + NADH + H(+). Its pathway is lipid metabolism; mycolic acid biosynthesis. In terms of biological role, enoyl-ACP reductase of the type II fatty acid syntase (FAS-II) system, which is involved in the biosynthesis of mycolic acids, a major component of mycobacterial cell walls. Catalyzes the NADH-dependent reduction of the double bond of 2-trans-enoyl-[acyl-carrier protein], an essential step in the fatty acid elongation cycle of the FAS-II pathway. Shows preference for long-chain fatty acyl thioester substrates, and can also use 2-trans-enoyl-CoAs as alternative substrates. The mycobacterial FAS-II system utilizes the products of the FAS-I system as primers to extend fatty acyl chain lengths up to C56, forming the meromycolate chain that serves as the precursor for final mycolic acids. Is the primary target of the first-line antitubercular drug isoniazid (INH) and of the second-line drug ethionamide (ETH). Overexpressed inhA confers INH and ETH resistance to M.bovis. The mechanism of isoniazid action against InhA is covalent attachment of the activated form of the drug to the nicotinamide ring of NAD and binding of the INH-NAD adduct to the active site of InhA. Similarly, the ETH-NAD adduct binds InhA. In Mycobacterium bovis (strain ATCC BAA-935 / AF2122/97), this protein is Enoyl-[acyl-carrier-protein] reductase [NADH].